Here is a 125-residue protein sequence, read N- to C-terminus: Large ribosomal subunit protein eL31 (125 aa).

This sequence belongs to the eukaryotic ribosomal protein eL31 family. As to quaternary structure, component of the large ribosomal subunit.

Its subcellular location is the cytoplasm. In terms of biological role, component of the large ribosomal subunit. The ribosome is a large ribonucleoprotein complex responsible for the synthesis of proteins in the cell. The chain is Large ribosomal subunit protein eL31 (rpl31) from Ictalurus punctatus (Channel catfish).